Reading from the N-terminus, the 469-residue chain is Glutamate--tRNA ligase (469 aa).

The 'HIGH' region motif lies at 11 to 21; that stretch reads PSPTGFIHLGN. The span at 121-131 shows a compositional bias: basic and acidic residues; that stretch reads PRYDGTWRPEP. Positions 121 to 141 are disordered; the sequence is PRYDGTWRPEPGKVLPEPPPG. A 'KMSKS' region motif is present at residues 243–247; sequence KMSKR. Lysine 246 is a binding site for ATP.

The protein belongs to the class-I aminoacyl-tRNA synthetase family. Glutamate--tRNA ligase type 1 subfamily. Monomer.

Its subcellular location is the cytoplasm. It catalyses the reaction tRNA(Glu) + L-glutamate + ATP = L-glutamyl-tRNA(Glu) + AMP + diphosphate. In terms of biological role, catalyzes the attachment of glutamate to tRNA(Glu) in a two-step reaction: glutamate is first activated by ATP to form Glu-AMP and then transferred to the acceptor end of tRNA(Glu). The sequence is that of Glutamate--tRNA ligase from Burkholderia multivorans (strain ATCC 17616 / 249).